The following is a 273-amino-acid chain: 4-hydroxy-tetrahydrodipicolinate reductase (273 aa).

12–17 (GANGRM) is an NAD(+) binding site. Position 39 (arginine 39) interacts with NADP(+). NAD(+)-binding positions include 102–104 (GTT) and 126–129 (AANF). The active-site Proton donor/acceptor is histidine 159. Histidine 160 contacts (S)-2,3,4,5-tetrahydrodipicolinate. Lysine 163 serves as the catalytic Proton donor. 169–170 (GT) lines the (S)-2,3,4,5-tetrahydrodipicolinate pocket.

It belongs to the DapB family. Homotetramer.

The protein localises to the cytoplasm. It carries out the reaction (S)-2,3,4,5-tetrahydrodipicolinate + NAD(+) + H2O = (2S,4S)-4-hydroxy-2,3,4,5-tetrahydrodipicolinate + NADH + H(+). The catalysed reaction is (S)-2,3,4,5-tetrahydrodipicolinate + NADP(+) + H2O = (2S,4S)-4-hydroxy-2,3,4,5-tetrahydrodipicolinate + NADPH + H(+). The protein operates within amino-acid biosynthesis; L-lysine biosynthesis via DAP pathway; (S)-tetrahydrodipicolinate from L-aspartate: step 4/4. In terms of biological role, catalyzes the conversion of 4-hydroxy-tetrahydrodipicolinate (HTPA) to tetrahydrodipicolinate. This is 4-hydroxy-tetrahydrodipicolinate reductase from Cronobacter sakazakii (strain ATCC BAA-894) (Enterobacter sakazakii).